A 337-amino-acid polypeptide reads, in one-letter code: Oligopeptide transport ATP-binding protein OppD (337 aa).

An ABC transporter domain is found at 20 to 269; sequence LNVKDLRVTF…PVHPYSIGLL (250 aa). 56 to 63 is a binding site for ATP; the sequence is GESGSGKS.

The protein belongs to the ABC transporter superfamily. The complex is composed of two ATP-binding proteins (OppD and OppF), two transmembrane proteins (OppB and OppC) and a solute-binding protein (OppA or MppA).

The protein resides in the cell inner membrane. It catalyses the reaction a [peptide](out) + ATP + H2O = a [peptide](in) + ADP + phosphate + H(+). The catalysed reaction is L-alanyl-gamma-D-glutamyl-meso-2,6-diaminopimelate(out) + ATP + H2O = L-alanyl-gamma-D-glutamyl-meso-2,6-diaminopimelate(in) + ADP + phosphate + H(+). Part of the ABC transporter complex OppABCDF involved in the uptake of oligopeptides and of the ABC transporter complex MppA-OppBCDF involved in the uptake of the cell wall murein tripeptide L-alanyl-gamma-D-glutamyl-meso-diaminopimelate. Probably responsible for energy coupling to the transport system. Plays an important nutritional role and is involved in the recycling of cell wall peptides. The chain is Oligopeptide transport ATP-binding protein OppD (oppD) from Escherichia coli (strain K12).